The following is a 187-amino-acid chain: dCTP deaminase, dUMP-forming (187 aa).

DCTP is bound by residues 101 to 106, Asp119, 127 to 129, Gln148, Tyr162, Lys170, and Gln174; these read KSSLGR and TLE. The Proton donor/acceptor role is filled by Glu129.

Belongs to the dCTP deaminase family. In terms of assembly, homotrimer.

It carries out the reaction dCTP + 2 H2O = dUMP + NH4(+) + diphosphate. The protein operates within pyrimidine metabolism; dUMP biosynthesis; dUMP from dCTP: step 1/1. Functionally, bifunctional enzyme that catalyzes both the deamination of dCTP to dUTP and the hydrolysis of dUTP to dUMP without releasing the toxic dUTP intermediate. The chain is dCTP deaminase, dUMP-forming from Corynebacterium diphtheriae (strain ATCC 700971 / NCTC 13129 / Biotype gravis).